A 912-amino-acid polypeptide reads, in one-letter code: uncharacterized protein (912 aa).

Composition is skewed to basic and acidic residues over residues 20–32 (IERL…AEPA) and 39–67 (HEYE…EDKT). The disordered stretch occupies residues 20–91 (IERLREQGRA…KPTLPQPETD (72 aa)). Residues 68-77 (RHKKLKHRSR) are compositionally biased toward basic residues.

This is an uncharacterized protein from Penicillium chrysogenum virus (isolate Caston/2003) (PcV).